The primary structure comprises 397 residues: Elongation factor Tu (397 aa).

Positions 10–206 (KPHVNIGTIG…AVDSYIPTPE (197 aa)) constitute a tr-type G domain. Positions 19–26 (GHVDHGKT) are G1. Residue 19 to 26 (GHVDHGKT) coordinates GTP. Threonine 26 provides a ligand contact to Mg(2+). A G2 region spans residues 60–64 (GITIN). The segment at 81–84 (DCPG) is G3. GTP is bound by residues 81 to 85 (DCPGH) and 136 to 139 (NKAD). Residues 136-139 (NKAD) form a G4 region. A G5 region spans residues 174–176 (SAL).

This sequence belongs to the TRAFAC class translation factor GTPase superfamily. Classic translation factor GTPase family. EF-Tu/EF-1A subfamily. As to quaternary structure, monomer.

The protein resides in the cytoplasm. The catalysed reaction is GTP + H2O = GDP + phosphate + H(+). Functionally, GTP hydrolase that promotes the GTP-dependent binding of aminoacyl-tRNA to the A-site of ribosomes during protein biosynthesis. This chain is Elongation factor Tu, found in Clostridium perfringens (strain ATCC 13124 / DSM 756 / JCM 1290 / NCIMB 6125 / NCTC 8237 / Type A).